A 378-amino-acid polypeptide reads, in one-letter code: Stimulator of interferon genes protein (378 aa).

Residues methionine 1–arginine 17 are Cytoplasmic-facing. The tract at residues methionine 1–leucine 190 is mediates interaction with ZDHHC1 and ZDHHC11. The helical transmembrane segment at alanine 18 to tryptophan 34 threads the bilayer. The Lumenal portion of the chain corresponds to glycine 35–leucine 44. Residues arginine 45 to glutamate 69 traverse the membrane as a helical segment. Over leucine 70 to cysteine 91 the chain is Cytoplasmic. 2 S-palmitoyl cysteine lipidation sites follow: cysteine 88 and cysteine 91. Residues proline 92–tyrosine 106 traverse the membrane as a helical segment. The Lumenal segment spans residues phenylalanine 107–proline 116. A helical membrane pass occupies residues leucine 117–leucine 134. At glycine 135–phenylalanine 378 the chain is on the cytoplasmic side. A Glycyl lysine isopeptide (Lys-Gly) (interchain with G-Cter in ubiquitin) cross-link involves residue lysine 150. The cyclic dinucleotide-binding domain (CBD) stretch occupies residues phenylalanine 153 to glutamate 339. 2 residues coordinate 2',3'-cGAMP: serine 162 and tyrosine 167. Residues serine 162 and tyrosine 167 each contribute to the 3',3'-c-di-GMP site. A 2',3'-cUAMP-binding site is contributed by tyrosine 167. Lysine 236 is covalently cross-linked (Glycyl lysine isopeptide (Lys-Gly) (interchain with G-Cter in ubiquitin)). Residues arginine 238 and threonine 263 each contribute to the 2',3'-cGAMP site. 2 residues coordinate 2',3'-cUAMP: arginine 238 and threonine 263. Residues arginine 238 to threonine 241 and threonine 263 contribute to the 3',3'-c-di-GMP site. Residues glutamate 339–phenylalanine 378 form a C-terminal tail (CTT) region. Serine 354 is modified (phosphoserine). Phosphothreonine is present on threonine 355. Phosphoserine; by TBK1 occurs at positions 357 and 365. The pLxIS motif motif lies at leucine 362–serine 365.

It belongs to the STING family. As to quaternary structure, homodimer; forms a homodimer in absence of cyclic nucleotide (c-di-GMP or cGAMP); 'Lys-63'-linked ubiquitination at Lys-150 is required for homodimerization. Homotetramer; in presence of cyclic nucleotide (c-di-GMP or cGAMP), forms tetramers and higher-order oligomers through side-by-side packing. Interacts (when phosphorylated) with IRF3; following activation and phosphorylation on the pLxIS motif by TBK1, recruits IRF3. Interacts with DDX58/RIG-I, MAVS and SSR2. Interacts with RNF5 and TRIM56. Interacts with TBK1; when homodimer, leading to subsequent production of IFN-beta. Interacts with IFIT1 and IFIT2. Interacts with TRIM29; this interaction induces STING1 ubiquitination and subsequent degradation. Associates with the MHC-II complex. Interacts with STEEP1; interaction takes place upon cGAMP-activation and STING1 phosphorylation by MAP3K7/TAK1 and promotes STING1 translocation to COPII vesicles. Interacts with SEC24A, SEC24B and SEC24C; promoting translocation to COPII vesicles. Interacts (when ubiquitinated) with SQSTM1; leading to relocalization to autophagosomes. Interacts with SURF4. Interacts with HNRNPA2B1. Interacts with ZDHHC1; ZDHHC1 constitutively interacts with STING1 and in presence of DNA viruses activates it by promoting its cGAMP-induced oligomerization and the recruitment of downstream signaling components. Interacts with ZDHHC11; in presence of DNA viruses promotes the recruitment of IRF3 to STING1. Interacts with TOMM70. Interacts with TAB1; promoting recruitment of TAB1 to the endoplasmic reticulum membrane and subsequent activation of MAP3K7/TAK1. Interacts (via transmembrane domain) with TMEM203. Interacts with DDX41. (Microbial infection) Interacts with African swine fever virus/ASFV protein A528R; this interaction mediates STING1 degradation. In terms of assembly, (Microbial infection) Interacts with African swine fever virus/ASFV minor capsid protein p17. As to quaternary structure, (Microbial infection) Interacts with Pseudorabies virus protein UL13; this interaction mediates STING1 degradation in a RNF5-dependent manner. Phosphorylation by TBK1 leads to activation and production of IFN-beta. Following cyclic nucleotide (c-di-GMP or cGAMP)-binding, activation and translocation from the endoplasmic reticulum, STING1 is phosphorylated by TBK1 at Ser-365 in the pLxIS motif. The phosphorylated pLxIS motif constitutes an IRF3-binding motif, leading to recruitment of the transcription factor IRF3 to induce type-I interferons and other cytokines. Phosphorylated on tyrosine residues upon MHC-II aggregation. Dephosphorylation by PPP6C leads to inactivation and decreased production of IFN-beta. Phosphorylation at Ser-357 is also required to activate IRF3. Phosphorylation at Ser-354 by MAP3K7/TAK1 facilitates its interaction with STEEP1, promoting STING1 translocation to COPII vesicles. Post-translationally, ubiquitinated. Ubiquitinated via 'Lys-63'-linked ubiquitin chains in response to double-stranded DNA treatment, leading to relocalization to autophagosomes and subsequent degradation; this process is dependent on SQSTM1. 'Lys-63'-linked ubiquitination mediated by TRIM56 at Lys-150 promotes homodimerization and recruitment of the antiviral kinase TBK1 and subsequent production of IFN-beta. 'Lys-48'-linked polyubiquitination at Lys-150 occurring after viral infection is mediated by RNF5 and leads to proteasomal degradation. 'Lys-11'-linked polyubiquitination at Lys-150 by RNF26 leads to stabilize STING1: it protects STING1 from RNF5-mediated 'Lys-48'-linked polyubiquitination. 'Lys-33'-linked and 'Lys-48'-linked deubiquitinated by USP20; leading to its stabilization and promotion of innate antiviral response. 'Lys-48'-linked deubiquitinated by USP44; leading to its stabilization and promotion of innate antiviral response. Deubiquitinated by USP13; leading to inhibition of innate antiviral response. 'Lys-63'-linked deubiquitinated by USP49; leading to inhibition of the subsequent recruitment of TBK1 to the signaling complex. 'Lys-63'-linked ubiquitination mediated by RNF39 promotes the activation of the cGAS-STING pathway. In terms of processing, palmitoylation takes place in the Golgi apparatus and creates a platform for the recruitment of TBK1. As to expression, expressed at higher level in the spleen, lymph node, lung and bone marrow, followed by the small intestine, heart, liver and brain, and to a lesser extent in the stomach and kidney.

It is found in the endoplasmic reticulum membrane. The protein localises to the cytoplasm. Its subcellular location is the perinuclear region. The protein resides in the endoplasmic reticulum-Golgi intermediate compartment membrane. It localises to the golgi apparatus membrane. It is found in the cytoplasmic vesicle. The protein localises to the autophagosome membrane. Its subcellular location is the mitochondrion outer membrane. The protein resides in the cell membrane. The enzyme catalyses H(+)(in) = H(+)(out). Functionally, facilitator of innate immune signaling that acts as a sensor of cytosolic DNA from bacteria and viruses and promotes the production of type I interferon (IFN-alpha and IFN-beta). Innate immune response is triggered in response to non-CpG double-stranded DNA from viruses and bacteria delivered to the cytoplasm. Acts by binding cyclic dinucleotides: recognizes and binds cyclic di-GMP (c-di-GMP), a second messenger produced by bacteria, cyclic UMP-AMP (2',3'-cUAMP), and cyclic GMP-AMP (cGAMP), a messenger produced by CGAS in response to DNA virus in the cytosol. Upon binding to c-di-GMP, cUAMP or cGAMP, STING1 oligomerizes, translocates from the endoplasmic reticulum and is phosphorylated by TBK1 on the pLxIS motif, leading to recruitment and subsequent activation of the transcription factor IRF3 to induce expression of type I interferon and exert a potent anti-viral state. Exhibits 2',3' phosphodiester linkage-specific ligand recognition: can bind both 2'-3' linked cGAMP (2'-3'-cGAMP) and 3'-3' linked cGAMP but is preferentially activated by 2'-3' linked cGAMP. The preference for 2'-3'-cGAMP, compared to other linkage isomers is probably due to the ligand itself, whichs adopts an organized free-ligand conformation that resembles the STING1-bound conformation and pays low energy costs in changing into the active conformation. In addition to promote the production of type I interferons, plays a direct role in autophagy. Following cGAMP-binding, STING1 buds from the endoplasmic reticulum into COPII vesicles, which then form the endoplasmic reticulum-Golgi intermediate compartment (ERGIC). The ERGIC serves as the membrane source for WIPI2 recruitment and LC3 lipidation, leading to formation of autophagosomes that target cytosolic DNA or DNA viruses for degradation by the lysosome. Promotes autophagy by acting as a proton channel that directs proton efflux from the Golgi to facilitate MAP1LC3B/LC3B lipidation. The autophagy- and interferon-inducing activities can be uncoupled and autophagy induction is independent of TBK1 phosphorylation. Autophagy is also triggered upon infection by bacteria: following c-di-GMP-binding, which is produced by live Gram-positive bacteria, promotes reticulophagy. May be involved in translocon function, the translocon possibly being able to influence the induction of type I interferons. May be involved in transduction of apoptotic signals via its association with the major histocompatibility complex class II (MHC-II). The sequence is that of Stimulator of interferon genes protein from Sus scrofa (Pig).